A 735-amino-acid chain; its full sequence is Zinc finger CCCH domain-containing protein 14 (735 aa).

Residue Met1 is modified to N-acetylmethionine. The tract at residues 78–153 (TEPSSLKSPD…RHSYDDGAST (76 aa)) is disordered. The residue at position 85 (Ser85) is a Phosphoserine. Glycyl lysine isopeptide (Lys-Gly) (interchain with G-Cter in SUMO2) cross-links involve residues Lys99, Lys139, Lys175, and Lys198. Residues 131 to 144 (VSTSSQEQKSTNVR) are compositionally biased toward polar residues. Phosphoserine is present on Ser240. Glycyl lysine isopeptide (Lys-Gly) (interchain with G-Cter in SUMO2) cross-links involve residues Lys245, Lys283, and Lys295. A disordered region spans residues 308–351 (FSHDGEEEEEDEDYGTRIGSLSSSVSVPAKPERRPSLPPSKQAN). Residues Ser309, Ser327, and Ser343 each carry the phosphoserine modification. Lys357 carries the post-translational modification N6-acetyllysine; alternate. A Glycyl lysine isopeptide (Lys-Gly) (interchain with G-Cter in SUMO2); alternate cross-link involves residue Lys357. Lys378 is covalently cross-linked (Glycyl lysine isopeptide (Lys-Gly) (interchain with G-Cter in SUMO2)). A phosphoserine mark is found at Ser390 and Ser409. The tract at residues 399–431 (VQGQNRAPRISPPVKEEEAKGDNTGKSQGTQQR) is disordered. A compositionally biased stretch (basic and acidic residues) spans 412–421 (VKEEEAKGDN). A Glycyl lysine isopeptide (Lys-Gly) (interchain with G-Cter in SUMO2) cross-link involves residue Lys413. Residues 422 to 431 (TGKSQGTQQR) are compositionally biased toward polar residues. Lys489 is covalently cross-linked (Glycyl lysine isopeptide (Lys-Gly) (interchain with G-Cter in SUMO2)). Ser498, Ser515, Ser527, and Ser620 each carry phosphoserine. 5 C3H1-type zinc fingers span residues 595–620 (EKLLERCKYWPACKNGDECVYHHPIS), 621–640 (PCKAFPNCKFAEKCLFVHPN), 641–656 (CKYDTKCTKADCPFTH), 681–698 (CRYFPACKKMECPFYHPK), and 700–718 (CRFNTQCTRPDCTFYHPTI).

It belongs to the ZC3H14 family. As to quaternary structure, homodimer; facilitating circular RNAs (circRNAs) formation. Associates with the spliceosome. Interacts with HOOK2. Interacts with ZFC3H1 in a RNase-sensitive manner. In terms of tissue distribution, expressed in hippocampal pyramidal neurons (at protein level). Expressed in kidney, liver, muscle, heart brain and testes. Expressed in hippocampal pyramidal neurons.

The protein resides in the nucleus speckle. Functionally, RNA-binding protein involved in the biogenesis of circular RNAs (circRNAs), which are produced by back-splicing circularization of pre-mRNAs. Acts by binding to both exon-intron boundary and 3'-UTR of pre-mRNAs to promote circRNA biogenesis through dimerization and the association with the spliceosome. Required for spermatogenesis via involvement in circRNA biogenesis. Regulates the pre-mRNA processing of ATP5MC1; preventing its degradation. Also binds the poly(A) tail of mRNAs; controlling poly(A) length in neuronal cells. The protein is Zinc finger CCCH domain-containing protein 14 of Mus musculus (Mouse).